Here is a 545-residue protein sequence, read N- to C-terminus: Thermosome subunit alpha (545 aa).

Residues 522 to 545 (KKSTPPSGQGGQGQGMPGGGMPEY) are disordered. Over residues 529–545 (GQGGQGQGMPGGGMPEY) the composition is skewed to gly residues.

It belongs to the TCP-1 chaperonin family. As to quaternary structure, forms a Heterooligomeric complex of two stacked eight-membered rings. Post-translationally, the N-terminus is blocked.

Its function is as follows. Molecular chaperone; binds unfolded polypeptides in vitro, and has a weak ATPase activity. This is Thermosome subunit alpha (thsA) from Thermoplasma acidophilum (strain ATCC 25905 / DSM 1728 / JCM 9062 / NBRC 15155 / AMRC-C165).